A 152-amino-acid polypeptide reads, in one-letter code: Protein NrdI (152 aa).

This sequence belongs to the NrdI family.

Its function is as follows. Probably involved in ribonucleotide reductase function. The polypeptide is Protein NrdI (Mycobacterium sp. (strain JLS)).